The sequence spans 161 residues: Endoribonuclease YbeY (161 aa).

His121, His125, and His131 together coordinate Zn(2+).

It belongs to the endoribonuclease YbeY family. Requires Zn(2+) as cofactor.

It is found in the cytoplasm. Its function is as follows. Single strand-specific metallo-endoribonuclease involved in late-stage 70S ribosome quality control and in maturation of the 3' terminus of the 16S rRNA. The sequence is that of Endoribonuclease YbeY from Xanthomonas axonopodis pv. citri (strain 306).